The sequence spans 231 residues: Ion-translocating oxidoreductase complex subunit E (231 aa).

6 helical membrane passes run 18 to 38 (ALVQLLGLCPLLAVTSTATNA), 39 to 59 (LGLGLATTLVLTLTNLTISTL), 63 to 83 (TPAEIRIPIYVMIIASVVSAV), 86 to 106 (LINAYAFGLYQSLGIFIPLIV), 125 to 145 (ALSALDGFSIGMGATCAMFVL), and 182 to 202 (PFLLAMLPPGAFIGLGLMLAG).

This sequence belongs to the NqrDE/RnfAE family. The complex is composed of six subunits: RsxA, RsxB, RsxC, RsxD, RsxE and RsxG.

It is found in the cell inner membrane. Functionally, part of a membrane-bound complex that couples electron transfer with translocation of ions across the membrane. Required to maintain the reduced state of SoxR. The protein is Ion-translocating oxidoreductase complex subunit E of Escherichia coli O127:H6 (strain E2348/69 / EPEC).